A 628-amino-acid chain; its full sequence is Nuclear receptor subfamily 4 group A member 3 (628 aa).

Residues 1–112 form an activation function (AF)-1 domain region; sequence MPCVQAQYSP…HHHHHHHHHH (112 aa). Positions 1–140 are required for DNA-PK heterotrimer; the sequence is MPCVQAQYSP…PSTSMYFKQS (140 aa). The interaction with NCOA1, NCOA2, NCOA3 and KAT2B stretch occupies residues 1 to 293; the sequence is MPCVQAQYSP…NRSSSSGEGT (293 aa). 2 disordered regions span residues 96–163 and 269–290; these read HGYH…DELP and ASSL…SSSG. Over residues 97–113 the composition is skewed to basic residues; that stretch reads GYHHHHHHHHHHHHHHQ. A compositionally biased stretch (pro residues) spans 142 to 151; the sequence is PSTPTTPGFP. Residues 270 to 289 are compositionally biased toward low complexity; it reads SSLLGESPSLPSPPNRSSSS. The segment at residues 291-366 is a DNA-binding region (nuclear receptor); it reads EGTCAVCGDN…VGMVKEVVRT (76 aa). NR C4-type zinc fingers lie at residues 294–314 and 330–354; these read CAVC…CEGC and CLAN…FQKC. The disordered stretch occupies residues 366–396; the sequence is TDSLKGRRGRLPSKPKSPLQQEPSQPSPPSP. A compositionally biased stretch (low complexity) spans 379–389; it reads KPKSPLQQEPS. Residues 381–628 are interaction with KAT2B; it reads KSPLQQEPSQ…DKLFLDTLPF (248 aa). In terms of domain architecture, NR LBD spans 396-625; sequence PPICMMNALV…SVIDKLFLDT (230 aa).

It belongs to the nuclear hormone receptor family. NR4 subfamily. As to quaternary structure, interacts with SIX3 (via homeobox); differentially regulates the transcriptional activities of NR4A3. Interacts with NR3C1 (via nuclear receptor DNA-binding domain); the interactions represses transcription activity of NR4A3 on the POMC promoter Nur response element (NurRE). Interacts with TRIM28; the interactions potentiates NR4A3 activity on NurRE promoter. Binds DNA as a monomer and homodimer. Interacts with PARP1; activates PARP1 by improving acetylation of PARP1 and suppressing the interaction between PARP1 and SIRT1. Interacts with the constituents of DNA-PK heterotrimer PRKDC, XRCC6 and XRCC5; phosphorylates and prevents NR4A3 ubiquitinylation and degradation. Interacts with NCOA2; potentiates the activity of the NR4A3. Interacts with NCOA1, NCOA3, MED1 and KAT2B. Interacts with EP300 and NCOA2; mediates the recruitment of MED1 in the coactivator complex. In terms of processing, phosphorylated by PRKDC. In terms of tissue distribution, expressed at high levels in cultured apoptotic neuronal cells and fetal brain, and at low level in adult brain.

It localises to the nucleus. In terms of biological role, transcriptional activator that binds to regulatory elements in promoter regions in a cell- and response element (target)-specific manner. Induces gene expression by binding as monomers to the NR4A1 response element (NBRE) 5'-AAAAGGTCA-3' site and as homodimers to the Nur response element (NurRE) site in the promoter of their regulated target genes. Plays a role in the regulation of proliferation, survival and differentiation of many different cell types and also in metabolism and inflammation. Mediates proliferation of vascular smooth muscle, myeloid progenitor cell and type B pancreatic cells; promotes mitogen-induced vascular smooth muscle cell proliferation through transactivation of SKP2 promoter by binding a NBRE site. Upon PDGF stimulation, stimulates vascular smooth muscle cell proliferation by regulating CCND1 and CCND2 expression. In islets, induces type B pancreatic cell proliferation through up-regulation of genes that activate cell cycle, as well as genes that cause degradation of the CDKN1A. Negatively regulates myeloid progenitor cell proliferation by repressing RUNX1 in a NBRE site-independent manner. During inner ear, plays a role as a key mediator of the proliferative growth phase of semicircular canal development. Also mediates survival of neuron and smooth muscle cells; mediates CREB-induced neuronal survival, and during hippocampus development, plays a critical role in pyramidal cell survival and axonal guidance. Is required for S phase entry of the cell cycle and survival of smooth muscle cells by inducing CCND1, resulting in RB1 phosphorylation. Binds to NBRE motif in CCND1 promoter, resulting in the activation of the promoter and CCND1 transcription. Also plays a role in inflammation; Upon TNF stimulation, mediates monocyte adhesion by inducing the expression of VCAM1 and ICAM1 by binding to the NBRE consensus site. In mast cells activated by Fc-epsilon receptor cross-linking, promotes the synthesis and release of cytokines but impairs events leading to degranulation. Also plays a role in metabolism; by modulating feeding behavior; and by playing a role in energy balance by inhibiting the glucocorticoid-induced orexigenic neuropeptides AGRP expression, at least in part by forming a complex with activated NR3C1 on the AGRP-glucocorticoid response element (GRE), and thus weakening the DNA binding activity of NR3C1. Upon catecholamines stimulation, regulates gene expression that controls oxidative metabolism in skeletal muscle. Plays a role in glucose transport by regulating translocation of the SLC2A4 glucose transporter to the cell surface. Finally, during gastrulation plays a crucial role in the formation of anterior mesoderm by controlling cell migration. Also participates in cardiac hypertrophy by activating PARP1. This chain is Nuclear receptor subfamily 4 group A member 3 (Nr4a3), found in Rattus norvegicus (Rat).